The following is a 363-amino-acid chain: Eukaryotic translation initiation factor 3 subunit H (363 aa).

The MPN domain maps to 13-163 (VQVEALVVMK…LRAFRLSTAF (151 aa)).

The protein belongs to the eIF-3 subunit H family. Component of the eukaryotic translation initiation factor 3 (eIF-3) complex.

It is found in the cytoplasm. Component of the eukaryotic translation initiation factor 3 (eIF-3) complex, which is involved in protein synthesis of a specialized repertoire of mRNAs and, together with other initiation factors, stimulates binding of mRNA and methionyl-tRNAi to the 40S ribosome. The eIF-3 complex specifically targets and initiates translation of a subset of mRNAs involved in cell proliferation. The sequence is that of Eukaryotic translation initiation factor 3 subunit H from Pyricularia oryzae (strain 70-15 / ATCC MYA-4617 / FGSC 8958) (Rice blast fungus).